A 362-amino-acid chain; its full sequence is UDP-N-acetylglucosamine--N-acetylmuramyl-(pentapeptide) pyrophosphoryl-undecaprenol N-acetylglucosamine transferase (362 aa).

UDP-N-acetyl-alpha-D-glucosamine-binding positions include 15-17, Asn-127, Arg-165, Ser-191, Ile-247, 266-271, and Gln-292; these read TGG and ALTVSE.

Belongs to the glycosyltransferase 28 family. MurG subfamily.

The protein resides in the cell inner membrane. It carries out the reaction di-trans,octa-cis-undecaprenyl diphospho-N-acetyl-alpha-D-muramoyl-L-alanyl-D-glutamyl-meso-2,6-diaminopimeloyl-D-alanyl-D-alanine + UDP-N-acetyl-alpha-D-glucosamine = di-trans,octa-cis-undecaprenyl diphospho-[N-acetyl-alpha-D-glucosaminyl-(1-&gt;4)]-N-acetyl-alpha-D-muramoyl-L-alanyl-D-glutamyl-meso-2,6-diaminopimeloyl-D-alanyl-D-alanine + UDP + H(+). The protein operates within cell wall biogenesis; peptidoglycan biosynthesis. Functionally, cell wall formation. Catalyzes the transfer of a GlcNAc subunit on undecaprenyl-pyrophosphoryl-MurNAc-pentapeptide (lipid intermediate I) to form undecaprenyl-pyrophosphoryl-MurNAc-(pentapeptide)GlcNAc (lipid intermediate II). The chain is UDP-N-acetylglucosamine--N-acetylmuramyl-(pentapeptide) pyrophosphoryl-undecaprenol N-acetylglucosamine transferase from Shewanella oneidensis (strain ATCC 700550 / JCM 31522 / CIP 106686 / LMG 19005 / NCIMB 14063 / MR-1).